A 407-amino-acid chain; its full sequence is Imidazolonepropionase (407 aa).

Histidine 68 and histidine 70 together coordinate Fe(3+). Residues histidine 68 and histidine 70 each coordinate Zn(2+). Arginine 77, tyrosine 140, and histidine 173 together coordinate 4-imidazolone-5-propanoate. An N-formimidoyl-L-glutamate-binding site is contributed by tyrosine 140. Histidine 238 provides a ligand contact to Fe(3+). Histidine 238 provides a ligand contact to Zn(2+). 4-imidazolone-5-propanoate is bound at residue glutamine 241. Aspartate 313 lines the Fe(3+) pocket. Residue aspartate 313 coordinates Zn(2+). Residues asparagine 315 and glycine 317 each contribute to the N-formimidoyl-L-glutamate site. Threonine 318 is a 4-imidazolone-5-propanoate binding site.

It belongs to the metallo-dependent hydrolases superfamily. HutI family. Zn(2+) is required as a cofactor. The cofactor is Fe(3+).

The protein localises to the cytoplasm. The enzyme catalyses 4-imidazolone-5-propanoate + H2O = N-formimidoyl-L-glutamate. It participates in amino-acid degradation; L-histidine degradation into L-glutamate; N-formimidoyl-L-glutamate from L-histidine: step 3/3. In terms of biological role, catalyzes the hydrolytic cleavage of the carbon-nitrogen bond in imidazolone-5-propanoate to yield N-formimidoyl-L-glutamate. It is the third step in the universal histidine degradation pathway. The sequence is that of Imidazolonepropionase from Burkholderia mallei (strain ATCC 23344).